The following is a 213-amino-acid chain: Outer-membrane lipoprotein LolB (213 aa).

The N-terminal stretch at 1 to 24 (MNNLSYFTKTKLVWVILSLSLLSA) is a signal peptide. Residue Cys-25 is the site of N-palmitoyl cysteine attachment. The S-diacylglycerol cysteine moiety is linked to residue Cys-25.

It belongs to the LolB family. As to quaternary structure, monomer.

The protein resides in the cell outer membrane. In terms of biological role, plays a critical role in the incorporation of lipoproteins in the outer membrane after they are released by the LolA protein. This is Outer-membrane lipoprotein LolB from Shewanella woodyi (strain ATCC 51908 / MS32).